A 244-amino-acid chain; its full sequence is Type III pantothenate kinase (244 aa).

Position 6-13 (6-13) interacts with ATP; it reads DVGNTRIK. Residues Y87 and 94–97 contribute to the substrate site; that span reads GIDR. The active-site Proton acceptor is D96. D117 is a binding site for K(+). T120 lines the ATP pocket. T172 contributes to the substrate binding site.

Belongs to the type III pantothenate kinase family. Homodimer. The cofactor is NH4(+). It depends on K(+) as a cofactor.

The protein localises to the cytoplasm. The enzyme catalyses (R)-pantothenate + ATP = (R)-4'-phosphopantothenate + ADP + H(+). The protein operates within cofactor biosynthesis; coenzyme A biosynthesis; CoA from (R)-pantothenate: step 1/5. Catalyzes the phosphorylation of pantothenate (Pan), the first step in CoA biosynthesis. This is Type III pantothenate kinase from Flavobacterium johnsoniae (strain ATCC 17061 / DSM 2064 / JCM 8514 / BCRC 14874 / CCUG 350202 / NBRC 14942 / NCIMB 11054 / UW101) (Cytophaga johnsonae).